The sequence spans 231 residues: uncharacterized protein (231 aa).

An N-terminal signal peptide occupies residues 1–19; that stretch reads MKFKFLLTPLLSSVLFLSA. Cys-20 carries the N-palmitoyl cysteine lipid modification. A lipid anchor (S-diacylglycerol cysteine) is attached at Cys-20.

This sequence belongs to the MG439/MG440 family.

The protein localises to the cell membrane. This is an uncharacterized protein from Mycoplasma pneumoniae (strain ATCC 29342 / M129 / Subtype 1) (Mycoplasmoides pneumoniae).